Consider the following 492-residue polypeptide: Virion host shutoff protein (492 aa).

Disordered regions lie at residues 110–130 (EEAS…SRPS), 143–165 (FAPG…GAPS), 288–307 (SQAR…LESM), and 334–369 (EDDY…PPEL). A compositionally biased stretch (low complexity) spans 144–165 (APGDRGTRAAGPGPAAPSGAPS).

The protein belongs to the herpesviridae VHS protein family. In terms of assembly, interacts with human EIF4H, EIF4A1 and EIF4A2; interaction with eIF4AI and EIF4A2 presumably allows Vhs protein to associate with the eIF4F cap-binding complex.

The protein localises to the virion. Functionally, minor structural protein that acts as an endoribonuclease during lytic infection. Degrades host mRNAs in the cytoplasm by cutting them at preferred sites, including some in regions of translation initiation. Together with inhibition of host splicing by ICP27, contributes to an overall decrease in host protein synthesis. Also, after the onset of viral transcription, accelerates the turnover of viral mRNA, thereby facilitating the sequential expression of different classes of viral genes. Binds translation initiation factors eIF4H, eIF4AI, and eIF4AII, thereby may interact directly with the translation initiation complex and thus digest specifically mRNAs. Also impedes antigen presentation by major histocompatibility complex class I and class II molecules, inhibits secretion of cytokines that would otherwise recruit lymphocytes and neutrophils cells to the site of infection and blocks the activation of dendritic cells. Impedes the alpha/beta interferon-mediated response to infection. Inhibits the integrated stress response (ISR) in the infected cell, this function requires the endonuclease activity. Stress granule formation is thus inhibited, which allows protein synthesis and viral replication. The protein is Virion host shutoff protein (UL41) of Human herpesvirus 2 (strain G) (HHV-2).